The primary structure comprises 173 residues: Ribosome maturation factor RimM (173 aa).

The 74-residue stretch at 98–171 folds into the PRC barrel domain; the sequence is DDQYYYDEII…LITIDALEGL (74 aa).

It belongs to the RimM family. In terms of assembly, binds ribosomal protein uS19.

The protein resides in the cytoplasm. An accessory protein needed during the final step in the assembly of 30S ribosomal subunit, possibly for assembly of the head region. Essential for efficient processing of 16S rRNA. May be needed both before and after RbfA during the maturation of 16S rRNA. It has affinity for free ribosomal 30S subunits but not for 70S ribosomes. The protein is Ribosome maturation factor RimM of Leuconostoc mesenteroides subsp. mesenteroides (strain ATCC 8293 / DSM 20343 / BCRC 11652 / CCM 1803 / JCM 6124 / NCDO 523 / NBRC 100496 / NCIMB 8023 / NCTC 12954 / NRRL B-1118 / 37Y).